The following is a 303-amino-acid chain: Probable cell division protein WhiA (303 aa).

A DNA-binding region (H-T-H motif) is located at residues 272–303; that stretch reads SIQQLADSLSKPLTKSGVNHRLRKINKIADEL.

This sequence belongs to the WhiA family.

In terms of biological role, involved in cell division and chromosome segregation. The protein is Probable cell division protein WhiA of Streptococcus gordonii (strain Challis / ATCC 35105 / BCRC 15272 / CH1 / DL1 / V288).